The primary structure comprises 505 residues: MIQGSAPGGLSRLPSNKLTCEICGMVCIGPNVLMVHKRSHTGERPFQCNQCGASFTQKGNLLRHVKLHTDEKPFKCSLCSYACRRRDALMGHIRTHSVGKPYKCNFCSRSYKQRSSLEEHQERCPGFHQGLPSSHLAENAFSKYGTTTERADWEHVIRPGQEPPLLDDSALLPTDVRLGLDPAIETQLEPGFDKLSNQDRFSNNFQAKRKSSTPQKVFGQKRMQLELSDIHYDQATSSLSERLHEVPGPVCAQTLEPSASVFLNTPSPVTRSAGQALEATRRLESESPGLPSDIGSIVRPVYSQSVDNRFQHDSPLSTSRSGLSQQPGRHHPSPGILGGSLGGICGRPAEAVGDSRPVNMPPGRGATSSPSNSCPDSTDTESSHEERSHHRTGSGSSTSRPNGSTGRPHRPEMHQDNGRLNRVSGASDSSSLPTYNVSGSDGEALRTYPCHHCGLLFLDHVMYTLHMGCHGFRDPFECNVCGYRSRDRYEFSSHIIRGEHLPTAE.

C2H2-type zinc fingers lie at residues 18–40 (LTCEICGMVCIGPNVLMVHKRSH), 46–68 (FQCNQCGASFTQKGNLLRHVKLH), 74–96 (FKCSLCSYACRRRDALMGHIRTH), and 102–128 (YKCNFCSRSYKQRSSLEEHQERCPGFH). Composition is skewed to polar residues over residues 262 to 273 (FLNTPSPVTRSA) and 309 to 327 (RFQHDSPLSTSRSGLSQQP). Disordered stretches follow at residues 262–296 (FLNTPSPVTRSAGQALEATRRLESESPGLPSDIGS) and 309–440 (RFQH…VSGS). The segment covering 336–345 (ILGGSLGGIC) has biased composition (gly residues). Positions 366–377 (ATSSPSNSCPDS) are enriched in polar residues. Residues 393–406 (GSGSSTSRPNGSTG) are compositionally biased toward low complexity. The span at 409–419 (HRPEMHQDNGR) shows a compositional bias: basic and acidic residues. A compositionally biased stretch (polar residues) spans 424–439 (SGASDSSSLPTYNVSG). C2H2-type zinc fingers lie at residues 448–470 (YPCHHCGLLFLDHVMYTLHMGCH) and 476–500 (FECNVCGYRSRDRYEFSSHIIRGEH).

The protein belongs to the Ikaros C2H2-type zinc-finger protein family. As to quaternary structure, heterodimer and homodimer with other IKAROS family members. In terms of tissue distribution, expression is strongest in the blood, gills and intestine.

Its subcellular location is the nucleus. This chain is Ikaros family zinc finger protein, found in Myxine glutinosa (Atlantic hagfish).